A 48-amino-acid chain; its full sequence is Putative protein P' (48 aa).

This chain is Putative protein P', found in Bos taurus (Bovine).